Consider the following 856-residue polypeptide: Glucans biosynthesis glucosyltransferase H (856 aa).

The next 6 helical transmembrane spans lie at 144-164, 198-218, 517-537, 574-594, 608-628, and 684-704; these read ILLV…KGIM, ILIL…TALM, VFLT…FLVL, LFST…ILIW, TLSM…RMIF, and FLWW…VSVI.

It belongs to the glycosyltransferase 2 family. OpgH subfamily.

It is found in the cell inner membrane. Its pathway is glycan metabolism; osmoregulated periplasmic glucan (OPG) biosynthesis. Functionally, involved in the biosynthesis of osmoregulated periplasmic glucans (OPGs). The protein is Glucans biosynthesis glucosyltransferase H of Pseudomonas fluorescens (strain ATCC BAA-477 / NRRL B-23932 / Pf-5).